A 607-amino-acid polypeptide reads, in one-letter code: Bifunctional lysine-specific demethylase and histidyl-hydroxylase NO66 (607 aa).

Disordered regions lie at residues 23–121 (GPTI…IKTN) and 139–184 (ATQH…GEVE). Polar residues predominate over residues 25–37 (TIQQTGATKTPKT). A compositionally biased stretch (basic residues) spans 39–58 (SKIRRLSIRKSTRKIKHALK). Over residues 156-167 (DKTPVKRVRSDT) the composition is skewed to basic and acidic residues. The JmjC domain occupies 188 to 405 (EEAEKMFEWL…DLMEKLVPAA (218 aa)). Positions 328, 330, and 371 each coordinate Fe cation.

The protein belongs to the ROX family. NO66 subfamily. It depends on Fe(2+) as a cofactor.

Its subcellular location is the nucleus. It carries out the reaction L-histidyl-[protein] + 2-oxoglutarate + O2 = (3S)-3-hydroxy-L-histidyl-[protein] + succinate + CO2. The enzyme catalyses N(6),N(6)-dimethyl-L-lysyl(36)-[histone H3] + 2 2-oxoglutarate + 2 O2 = L-lysyl(36)-[histone H3] + 2 formaldehyde + 2 succinate + 2 CO2. In terms of biological role, oxygenase that can act as both a histone lysine demethylase and a ribosomal histidine hydroxylase. Specifically demethylates 'Lys-4' (H3K4me) and 'Lys-36' (H3K36me) of histone H3, thereby playing a central role in histone code. Also catalyzes the hydroxylation of 60S ribosomal protein L8. This chain is Bifunctional lysine-specific demethylase and histidyl-hydroxylase NO66, found in Branchiostoma floridae (Florida lancelet).